The primary structure comprises 145 residues: MRMGKIAVGYGFLLLLVFQLGVRASTLFNKYNVQELSSLKDLLERLEEKLSPGEESDVYAGSEDLVNDPEEDADLILDNVRKQAEKEFYKPAGFRDENLQRGRLRSIATSARSMNGCFGNRIERIGSWSSLGCNNSRFGSKKRIF.

An N-terminal signal peptide occupies residues 1-24 (MRMGKIAVGYGFLLLLVFQLGVRA). Cys-117 and Cys-133 are oxidised to a cystine.

It belongs to the natriuretic peptide family. In terms of tissue distribution, heart atrium and ventricle, and to a very low extent in brain.

It is found in the secreted. Functionally, exhibits natriuretic and vasodepressor activity. This is Ventricular natriuretic peptide (vnp) from Acipenser transmontanus (White sturgeon).